A 103-amino-acid polypeptide reads, in one-letter code: Salivary thrombin inhibitor anophelin (103 aa).

The first 21 residues, 1-21, serve as a signal peptide directing secretion; sequence MASKLFVLAFLCLALVVVVQS. The tract at residues 24-103 is disordered; it reads QYARGDVPTY…PAASSSESDE (80 aa). The interval 56-68 is blocks exosite I of host thrombin; sequence EEFDPSLLEEHAD. The tract at residues 74-77 is blocks active site cleft of host thrombin in a reverse direction compared to substrates; sequence DPGR. The span at 91 to 103 shows a compositional bias: low complexity; sequence ASAPAASSSESDE.

It belongs to the anophelin family. Interacts with human F2 (thrombin); the interaction results in thrombin inhibition. Female salivary gland (at protein level). Not detected in female midgut, head, carcass and male tissues (at protein level).

Its subcellular location is the secreted. With respect to regulation, increasing concentration of NaCl decreases affinity for thrombin. Functionally, salivary protein with anticoagulant activity that inhibits host thrombin (F2); binds to the proteinase in a reverse orientation (opposite to substrates). This is Salivary thrombin inhibitor anophelin from Anopheles gambiae (African malaria mosquito).